The following is a 274-amino-acid chain: Octanoyltransferase LipM (274 aa).

Residues 32–244 (GEVPPTLRFY…GFARALGLTL (213 aa)) enclose the BPL/LPL catalytic domain. Cys-146 acts as the Acyl-thioester intermediate in catalysis.

This sequence belongs to the octanoyltransferase LipM family. As to quaternary structure, monomer.

The catalysed reaction is octanoyl-[ACP] + L-lysyl-[protein] = N(6)-octanoyl-L-lysyl-[protein] + holo-[ACP] + H(+). It functions in the pathway protein modification; protein lipoylation via endogenous pathway; protein N(6)-(lipoyl)lysine from octanoyl-[acyl-carrier-protein]. Its function is as follows. Catalyzes the transfer of endogenously produced octanoic acid from octanoyl-acyl-carrier-protein onto the lipoyl domain of GcvH, an intermediate carrier during protein lipoylation. The polypeptide is Octanoyltransferase LipM (Symbiobacterium thermophilum (strain DSM 24528 / JCM 14929 / IAM 14863 / T)).